Consider the following 441-residue polypeptide: G-protein coupled receptor family C group 5 member C (441 aa).

The N-terminal stretch at 1–22 (MATHKTLLMCLGLPLFFPGALA) is a signal peptide. Residues 23–49 (QNHAPPGCSPDLDPLYYNLCDRSGAWG) lie on the Extracellular side of the membrane. A helical membrane pass occupies residues 50-70 (IVLEAVAGAGIITTFVLTIIL). Residues 71–84 (VASLPFVQDTKKRS) are Cytoplasmic-facing. The chain crosses the membrane as a helical span at residues 85–105 (LLGTQVFFLLGTLGLFCLVFA). Over 106-119 (CVVKPDFSTCASRR) the chain is Extracellular. A helical transmembrane segment spans residues 120-140 (FLFGVLFAICFSCLIAHTLSL). The Cytoplasmic portion of the chain corresponds to 141 to 154 (NFLARKNHGPRGWV). The chain crosses the membrane as a helical span at residues 155–175 (IFTVALLLTLVEVIINTEWLI). At 176 to 207 (ITLVRGGGQVSTPGNGSADWTVTSPCAIANMD) the chain is on the extracellular side. N190 carries N-linked (GlcNAc...) asparagine glycosylation. Residues 208–228 (FVMALIYVMLLLLAAFLGAWP) form a helical membrane-spanning segment. At 229 to 240 (TLCGRFKRWRKH) the chain is on the cytoplasmic side. A helical transmembrane segment spans residues 241–261 (GVFVLLTTATSIAIWVVWIVM). The Extracellular portion of the chain corresponds to 262-278 (YTYGNKQHHSPTWDDPT). A helical transmembrane segment spans residues 279-299 (LAIALAANAWTFVFFYVIPEV). Topologically, residues 300 to 441 (SQVTKPSPEQ…DQSPKNKTRW (142 aa)) are cytoplasmic. 4 positions are modified to phosphoserine: S343, S382, S402, and S405. Phosphotyrosine is present on Y413. Residues 419-441 (QVATPTKDGKISQDQSPKNKTRW) form a disordered region. T422 bears the Phosphothreonine mark. Polar residues predominate over residues 430 to 441 (SQDQSPKNKTRW). Residue S434 is modified to Phosphoserine.

This sequence belongs to the G-protein coupled receptor 3 family.

The protein localises to the cell membrane. This retinoic acid-inducible G-protein coupled receptor provide evidence for a possible interaction between retinoid and G-protein signaling pathways. The protein is G-protein coupled receptor family C group 5 member C (Gprc5c) of Rattus norvegicus (Rat).